We begin with the raw amino-acid sequence, 1643 residues long: Neurexin-3 (1643 aa).

The N-terminal stretch at 1-27 (MSSTLHSVFFTLKVSILLGSLLGLCLG) is a signal peptide. Residues 28–202 (LEFMGLPNQW…GVQMDAEGPC (175 aa)) form the Laminin G-like 1 domain. Residues 28–1568 (LEFMGLPNQW…EVIRESSSTT (1541 aa)) lie on the Extracellular side of the membrane. N-linked (GlcNAc...) asparagine glycans are attached at residues Asn58 and Asn105. The EGF-like 1 domain maps to 198 to 235 (AEGPCGERPCENGGICFLLDGHPTCDCSTTGYGGKLCS). Cystine bridges form between Cys202/Cys213, Cys207/Cys222, and Cys224/Cys234. Laminin G-like domains lie at 258–440 (VATF…VFKC) and 447–639 (DPIN…KSSC). Asp304, Leu321, and Met374 together coordinate Ca(2+). 5 disulfide bridges follow: Cys404–Cys440, Cys610–Cys639, Cys647–Cys658, Cys652–Cys667, and Cys669–Cys679. One can recognise an EGF-like 2 domain in the interval 643–680 (SAKQCDSYPCKNNAVCKDGWNRFICDCTGTGYWGRTCE). Laminin G-like domains follow at residues 685-857 (ILSY…IDYC) and 871-1046 (DPVT…ERGC). Residues Asp732 and Leu749 each contribute to the Ca(2+) site. N-linked (GlcNAc...) asparagine glycosylation is present at Asn757. Arg807 provides a ligand contact to Ca(2+). 4 cysteine pairs are disulfide-bonded: Cys1018/Cys1046, Cys1053/Cys1064, Cys1058/Cys1073, and Cys1075/Cys1085. Residues 1049–1086 (PSTTCQEDSCANQGVCMQQWEGFTCDCSMTSYSGNQCN) enclose the EGF-like 3 domain. The 171-residue stretch at 1090–1260 (ATYIFGKSGG…NPNIKINGSV (171 aa)) folds into the Laminin G-like 6 domain. Residues Asp1142 and Ile1159 each contribute to the Ca(2+) site. Residue Asn1189 is glycosylated (N-linked (GlcNAc...) asparagine). Ca(2+) contacts are provided by Ile1211 and Asn1213. N-linked (GlcNAc...) asparagine glycosylation is found at Asn1257 and Asn1301. The disordered stretch occupies residues 1294-1318 (ATTTTRKNRSTASIQPTSDDLVSSA). Residues 1303 to 1318 (STASIQPTSDDLVSSA) show a composition bias toward polar residues. A glycan (O-linked (Xyl...) (heparan sulfate) serine) is linked at Ser1317. Residues 1569 to 1589 (GMVVGIVAAAALCILILLYAM) traverse the membrane as a helical segment. Topologically, residues 1590-1643 (YKYRNRDEGSYQVDETRNYISNSAQSNGTLMKEKQQSSKSGHKKQKNKDREYYV) are cytoplasmic. Positions 1611–1643 (NSAQSNGTLMKEKQQSSKSGHKKQKNKDREYYV) are disordered.

It belongs to the neurexin family. The laminin G-like domain 2 binds to NXPH1. Specific isoforms bind to alpha-dystroglycan. The cytoplasmic C-terminal region binds to CASK. Specific isoforms bind neuroligins NLGN1, NLGN2 and NLGN3. Interacts with CLSTN3. O-glycosylated; contains heparan sulfate. Heparan sulfate attachment is required for synapse development by mediating interactions with neuroligins. Expressed in the blood vessel walls (at protein level). Highly expressed in brain, lung, and pancreas; a lower level of expression is detectable in heart, placenta, liver, and kidney, whereas no expression can be observed in skeletal muscle. Isoform 4a is heart-specific.

It is found in the presynaptic cell membrane. Its function is as follows. Neuronal cell surface protein that may be involved in cell recognition and cell adhesion. May mediate intracellular signaling. The protein is Neurexin-3 (NRXN3) of Homo sapiens (Human).